The chain runs to 345 residues: Phosphoribosylformylglycinamidine cyclo-ligase (345 aa).

The protein belongs to the AIR synthase family.

It localises to the cytoplasm. The enzyme catalyses 2-formamido-N(1)-(5-O-phospho-beta-D-ribosyl)acetamidine + ATP = 5-amino-1-(5-phospho-beta-D-ribosyl)imidazole + ADP + phosphate + H(+). It participates in purine metabolism; IMP biosynthesis via de novo pathway; 5-amino-1-(5-phospho-D-ribosyl)imidazole from N(2)-formyl-N(1)-(5-phospho-D-ribosyl)glycinamide: step 2/2. The chain is Phosphoribosylformylglycinamidine cyclo-ligase from Histophilus somni (strain 129Pt) (Haemophilus somnus).